The sequence spans 216 residues: Thymidylate kinase (216 aa).

10–17 (GPDGAGKS) is a binding site for ATP.

This sequence belongs to the thymidylate kinase family.

The catalysed reaction is dTMP + ATP = dTDP + ADP. Phosphorylation of dTMP to form dTDP in both de novo and salvage pathways of dTTP synthesis. The polypeptide is Thymidylate kinase (Lactobacillus acidophilus (strain ATCC 700396 / NCK56 / N2 / NCFM)).